Consider the following 293-residue polypeptide: D-alanine--D-alanine ligase (293 aa).

The 194-residue stretch at 98-291 folds into the ATP-grasp domain; that stretch reads KIIWKQHNLT…FNKLVVAIIN (194 aa). 124–177 serves as a coordination point for ATP; it reads DFPLPWMVKPTLEGSSIGISKVDSQIQLNNALMLAWQYNSHALIEQWIEGDEYT. Aspartate 245, glutamate 258, and asparagine 260 together coordinate Mg(2+).

The protein belongs to the D-alanine--D-alanine ligase family. Mg(2+) serves as cofactor. Requires Mn(2+) as cofactor.

Its subcellular location is the cytoplasm. It carries out the reaction 2 D-alanine + ATP = D-alanyl-D-alanine + ADP + phosphate + H(+). It participates in cell wall biogenesis; peptidoglycan biosynthesis. Functionally, cell wall formation. This Ruthia magnifica subsp. Calyptogena magnifica protein is D-alanine--D-alanine ligase.